The chain runs to 130 residues: Large ribosomal subunit protein bL12 (130 aa).

The protein belongs to the bacterial ribosomal protein bL12 family. In terms of assembly, homodimer. Part of the ribosomal stalk of the 50S ribosomal subunit. Forms a multimeric L10(L12)X complex, where L10 forms an elongated spine to which 2 to 4 L12 dimers bind in a sequential fashion. Binds GTP-bound translation factors.

Its function is as follows. Forms part of the ribosomal stalk which helps the ribosome interact with GTP-bound translation factors. Is thus essential for accurate translation. This is Large ribosomal subunit protein bL12 from Mycolicibacterium paratuberculosis (strain ATCC BAA-968 / K-10) (Mycobacterium paratuberculosis).